A 161-amino-acid chain; its full sequence is Globin CTT-VIIB-8 (161 aa).

Positions 1-16 (MKFFAVLALCIVGAIA) are cleaved as a signal peptide. A Globin domain is found at 18 to 161 (PLTADEASLV…NTYAIVVPRL (144 aa)). Residues histidine 76 and histidine 111 each coordinate heme b.

The protein belongs to the globin family. Homodimer.

The polypeptide is Globin CTT-VIIB-8 (CTT-7B8) (Chironomus thummi thummi (Midge)).